Here is a 259-residue protein sequence, read N- to C-terminus: Type III pantothenate kinase (259 aa).

An ATP-binding site is contributed by 6–13; it reads DVGNTNCT. 107 to 110 serves as a coordination point for substrate; it reads GSDR. Asp109 acts as the Proton acceptor in catalysis. K(+) is bound at residue Asp129. Thr132 provides a ligand contact to ATP. Thr184 contacts substrate.

Belongs to the type III pantothenate kinase family. Homodimer. The cofactor is NH4(+). K(+) serves as cofactor.

It localises to the cytoplasm. It carries out the reaction (R)-pantothenate + ATP = (R)-4'-phosphopantothenate + ADP + H(+). Its pathway is cofactor biosynthesis; coenzyme A biosynthesis; CoA from (R)-pantothenate: step 1/5. Its function is as follows. Catalyzes the phosphorylation of pantothenate (Pan), the first step in CoA biosynthesis. This Listeria welshimeri serovar 6b (strain ATCC 35897 / DSM 20650 / CCUG 15529 / CIP 8149 / NCTC 11857 / SLCC 5334 / V8) protein is Type III pantothenate kinase.